Here is a 378-residue protein sequence, read N- to C-terminus: Glutamate 5-kinase (378 aa).

Lys15 contributes to the ATP binding site. 3 residues coordinate substrate: Ser56, Asp143, and Asn155. Residue 175–176 coordinates ATP; that stretch reads SD. The region spanning 281-358 is the PUA domain; it reads KGTLTIDAGA…PDVAVILGIS (78 aa).

Belongs to the glutamate 5-kinase family.

The protein resides in the cytoplasm. The enzyme catalyses L-glutamate + ATP = L-glutamyl 5-phosphate + ADP. Its pathway is amino-acid biosynthesis; L-proline biosynthesis; L-glutamate 5-semialdehyde from L-glutamate: step 1/2. Its function is as follows. Catalyzes the transfer of a phosphate group to glutamate to form L-glutamate 5-phosphate. This Bradyrhizobium sp. (strain BTAi1 / ATCC BAA-1182) protein is Glutamate 5-kinase.